The sequence spans 205 residues: Protein Nef (205 aa).

G2 is lipidated: N-myristoyl glycine; by host. S6 is modified (phosphoserine; by host). Residues 62–65 (EEEE) form an acidic; interacts with host PACS1 and PACS2; stabilizes the interaction of NEF/MHC-I with host AP1M1; necessary for MHC-I internalization region. The segment at 69 to 78 (PVRPQVPVRP) is SH3-binding; interaction with Src family tyrosine kinases. A PxxP; stabilizes the interaction of NEF/MHC-I with host AP1M1; necessary for MHC-I internalization motif is present at residues 72 to 75 (PQVP). Positions 108 to 124 (DTLDLWVYHTQGYFPDW) are mediates dimerization, Nef-PTE1 interaction. The interval 148–180 (VDPEEVEKANEGENNCLLHPMSQHGMEDEDREV) is binding to ATP6V1H. The Dileucine internalization motif; necessary for CD4 internalization motif lies at 164–165 (LL). The Diacidic; necessary for CD4 internalization signature appears at 174 to 175 (ED).

It belongs to the lentivirus primate group Nef protein family. In terms of assembly, monomer; cytosolic form. Homodimer; membrane bound form. Interacts with Nef associated p21-activated kinase (PAK2); this interaction activates PAK2. Associates with the Nef-MHC-I-AP1 complex; this complex is required for MHC-I internalization. Interacts (via C-terminus) with host PI3-kinase. Interacts with host PACS1; this interaction seems to be weak. Interacts with host PACS2. Interacts with host LCK and MAPK3; these interactions inhibit the kinase activity of the latter. Interacts with host ATP6V1H; this interaction may play a role in CD4 endocytosis. Associates with the CD4-Nef-AP2 complex; this complex is required for CD4 internalization. Interacts with host AP2 subunit alpha and AP2 subunit sigma2. Interacts with TCR-zeta chain; this interaction up-regulates the Fas ligand (FasL) surface expression. Interacts with host HCK, LYN, and SRC; these interactions activate the Src family kinases. Interacts with MAP3K5; this interaction inhibits the Fas and TNFR-mediated death signals. Interacts with beta-COP and PTE1. Interacts with human RACK1; this increases Nef phosphorylation by PKC. Interacts with TP53; this interaction decreases the half-life of TP53, protecting the infected cell against p53-mediated apoptosis. The virion-associated Nef proteins are cleaved by the viral protease to release the soluble C-terminal core protein. Nef is probably cleaved concomitantly with viral structural proteins on maturation of virus particles. Post-translationally, myristoylated. In terms of processing, phosphorylated on serine residues, probably by host PKCdelta and theta.

It localises to the host cell membrane. Its subcellular location is the virion. The protein resides in the secreted. It is found in the host Golgi apparatus membrane. Factor of infectivity and pathogenicity, required for optimal virus replication. Alters numerous pathways of T-lymphocyte function and down-regulates immunity surface molecules in order to evade host defense and increase viral infectivity. Alters the functionality of other immunity cells, like dendritic cells, monocytes/macrophages and NK cells. In terms of biological role, in infected CD4(+) T-lymphocytes, down-regulates the surface MHC-I, mature MHC-II, CD4, CD28, CCR5 and CXCR4 molecules. Mediates internalization and degradation of host CD4 through the interaction of with the cytoplasmic tail of CD4, the recruitment of AP-2 (clathrin adapter protein complex 2), internalization through clathrin coated pits, and subsequent transport to endosomes and lysosomes for degradation. Diverts host MHC-I molecules to the trans-Golgi network-associated endosomal compartments by an endocytic pathway to finally target them for degradation. MHC-I down-regulation may involve AP-1 (clathrin adapter protein complex 1) or possibly Src family kinase-ZAP70/Syk-PI3K cascade recruited by PACS2. In consequence infected cells are masked for immune recognition by cytotoxic T-lymphocytes. Decreasing the number of immune receptors also prevents reinfection by more HIV particles (superinfection). Down-regulates host SERINC3 and SERINC5 thereby excluding these proteins from the viral particles. Virion infectivity is drastically higher when SERINC3 or SERINC5 are excluded from the viral envelope, because these host antiviral proteins impair the membrane fusion event necessary for subsequent virion penetration. Functionally, bypasses host T-cell signaling by inducing a transcriptional program nearly identical to that of anti-CD3 cell activation. Interaction with TCR-zeta chain up-regulates the Fas ligand (FasL). Increasing surface FasL molecules and decreasing surface MHC-I molecules on infected CD4(+) cells send attacking cytotoxic CD8+ T-lymphocytes into apoptosis. Its function is as follows. Plays a role in optimizing the host cell environment for viral replication without causing cell death by apoptosis. Protects the infected cells from apoptosis in order to keep them alive until the next virus generation is ready to strike. Inhibits the Fas and TNFR-mediated death signals by blocking MAP3K5/ASK1. Decreases the half-life of TP53, protecting the infected cell against p53-mediated apoptosis. Inhibits the apoptotic signals regulated by the Bcl-2 family proteins through the formation of a Nef/PI3-kinase/PAK2 complex that leads to activation of PAK2 and induces phosphorylation of host BAD. Extracellular Nef protein targets CD4(+) T-lymphocytes for apoptosis by interacting with CXCR4 surface receptors. In Human immunodeficiency virus type 1 group M subtype F1 (isolate VI850) (HIV-1), this protein is Protein Nef.